The chain runs to 443 residues: MAKYFGTDGIRGEVANSTITVEFTQKLGNAVGSLINQKNYPKFVIVGQDTRSSGGFLKFALVSGLNAAGIDVLDLGVVPTPVVAFMTVKHRAAAGFVITASHNKFTDNGIKLFSSNGFKLDDALEEEVEDMIDGDFIYQPQFKFGSYKILANAIDEYIESIYSRFAKFVNYKGKVVVDCAHGAASHNFEALLDKFGINYVSIASNPDGLNINVGCGATCVSNIKKAVKEQKADLGISLDGDADRIIIVDENGQEIDGDGILNILAQYSDICGGTNGIVGTQMTNMSYENHYRANKIPFIRSKVGDRYVLEDLVKYGYKIGGESSGHVINLNFGTTGDGLFTAIQLLAIFSQADKPVSEFKLQGELMQQTLINVPLTKKVAREDLQKVASDVNDVEKRLGNRGRVLLRPSGTEPVLRVMVEADDKSLATNEAEYLVEKVKQKLV.

S101 acts as the Phosphoserine intermediate in catalysis. Positions 101, 239, 241, and 243 each coordinate Mg(2+). S101 carries the phosphoserine modification.

It belongs to the phosphohexose mutase family. It depends on Mg(2+) as a cofactor. Activated by phosphorylation.

The enzyme catalyses alpha-D-glucosamine 1-phosphate = D-glucosamine 6-phosphate. In terms of biological role, catalyzes the conversion of glucosamine-6-phosphate to glucosamine-1-phosphate. This is Phosphoglucosamine mutase from Francisella tularensis subsp. tularensis (strain FSC 198).